The following is a 399-amino-acid chain: Tryptophan synthase beta chain (399 aa).

K92 carries the N6-(pyridoxal phosphate)lysine modification.

Belongs to the TrpB family. As to quaternary structure, tetramer of two alpha and two beta chains. Requires pyridoxal 5'-phosphate as cofactor.

The catalysed reaction is (1S,2R)-1-C-(indol-3-yl)glycerol 3-phosphate + L-serine = D-glyceraldehyde 3-phosphate + L-tryptophan + H2O. Its pathway is amino-acid biosynthesis; L-tryptophan biosynthesis; L-tryptophan from chorismate: step 5/5. In terms of biological role, the beta subunit is responsible for the synthesis of L-tryptophan from indole and L-serine. The protein is Tryptophan synthase beta chain of Exiguobacterium sibiricum (strain DSM 17290 / CCUG 55495 / CIP 109462 / JCM 13490 / 255-15).